A 369-amino-acid chain; its full sequence is Iron-sulfur cluster carrier protein (369 aa).

Residue 115–122 coordinates ATP; it reads GKGGVGKS.

This sequence belongs to the Mrp/NBP35 ATP-binding proteins family. As to quaternary structure, homodimer. Holo-ApbC forms a mixture of homodimers and homotetramers.

Binds and transfers iron-sulfur (Fe-S) clusters to target apoproteins. Can hydrolyze ATP. Both activities are required for function in vivo, but the ability to hydrolyze ATP is not necessary for Fe-S cluster transfer. This chain is Iron-sulfur cluster carrier protein, found in Salmonella typhimurium (strain LT2 / SGSC1412 / ATCC 700720).